Here is a 325-residue protein sequence, read N- to C-terminus: ATP synthase gamma chain (325 aa).

Belongs to the ATPase gamma chain family. F-type ATPases have 2 components, CF(1) - the catalytic core - and CF(0) - the membrane proton channel. CF(1) has five subunits: alpha(3), beta(3), gamma(1), delta(1), epsilon(1). CF(0) has three main subunits: a, b and c.

The protein resides in the cell membrane. In terms of biological role, produces ATP from ADP in the presence of a proton gradient across the membrane. The gamma chain is believed to be important in regulating ATPase activity and the flow of protons through the CF(0) complex. The protein is ATP synthase gamma chain of Corynebacterium glutamicum (strain ATCC 13032 / DSM 20300 / JCM 1318 / BCRC 11384 / CCUG 27702 / LMG 3730 / NBRC 12168 / NCIMB 10025 / NRRL B-2784 / 534).